The chain runs to 230 residues: TPR repeat-containing protein BB_0298 (230 aa).

TPR repeat units lie at residues 69–102 (ARFF…NPNN) and 183–216 (FEFL…ASTE).

This chain is TPR repeat-containing protein BB_0298, found in Borreliella burgdorferi (strain ATCC 35210 / DSM 4680 / CIP 102532 / B31) (Borrelia burgdorferi).